A 369-amino-acid chain; its full sequence is Protein RecA (369 aa).

Position 66-73 (66-73 (GPESSGKT)) interacts with ATP. The segment at 328 to 369 (GIDAESLEEKEDPEKVKEQRAKKAAPGEEKPAEPASPEKTDK) is disordered. A compositionally biased stretch (basic and acidic residues) spans 339 to 369 (DPEKVKEQRAKKAAPGEEKPAEPASPEKTDK).

The protein belongs to the RecA family.

The protein resides in the cytoplasm. Its function is as follows. Can catalyze the hydrolysis of ATP in the presence of single-stranded DNA, the ATP-dependent uptake of single-stranded DNA by duplex DNA, and the ATP-dependent hybridization of homologous single-stranded DNAs. It interacts with LexA causing its activation and leading to its autocatalytic cleavage. The polypeptide is Protein RecA (Lactobacillus delbrueckii subsp. bulgaricus (strain ATCC BAA-365 / Lb-18)).